A 565-amino-acid chain; its full sequence is Phosphatidylinositol 4-kinase gamma 4 (565 aa).

2 Ubiquitin-like domains span residues 32–104 (IVIF…LVVR) and 109–187 (RAIS…RPAK). The PI3K/PI4K catalytic domain maps to 257-542 (GYLPVMSTEG…AILPGTSEET (286 aa)). The interval 263 to 269 (STEGSGG) is G-loop. Residues 264 to 270 (TEGSGGV) and Lys-286 contribute to the ATP site. The segment at 291–311 (EPMAKNNPRGLPLSTDGEGLK) is disordered. ATP is bound at residue 369 to 372 (QLFV). The catalytic loop stretch occupies residues 402 to 410 (ANADRHAGN). Residues 425 to 451 (PIDHGYCLPEKFEDCTFEWLYWPQARE) form an activation loop region. Position 427 (Asp-427) interacts with ATP.

It belongs to the PI3/PI4-kinase family. Type II PI4K subfamily. Interacts with FTIP1 and RPN10. In terms of tissue distribution, specifically expressed in the phloem including companion cells.

It localises to the nucleus. Its subcellular location is the endoplasmic reticulum. It carries out the reaction a 1,2-diacyl-sn-glycero-3-phospho-(1D-myo-inositol) + ATP = a 1,2-diacyl-sn-glycero-3-phospho-(1D-myo-inositol 4-phosphate) + ADP + H(+). In terms of biological role, the phosphorylation of phosphatidylinositol (PI) to PI4P is the first committed step in the generation of phosphatidylinositol 4,5-bisphosphate (PIP2), a precursor of the second messenger inositol 1,4,5-trisphosphate (InsP3). Involved in the control of flowering under long day conditions by promoting degradation of FTIP1. Recruits FTIP1 for degradation by the 26S proteasome in leaves, which affects RFT1 transport to the shoot apical meristem (SAM). The sequence is that of Phosphatidylinositol 4-kinase gamma 4 from Oryza sativa subsp. japonica (Rice).